The chain runs to 354 residues: MNTLFMHCRPGFEGEVCAEISEHAARLGVAGYAKGKPQSASAEFVCSEEGGAERLMGELRFNQLIFPRQWARGGYVELPESDRISVLLAQLVDFPVFGSLWLEVLDSNEGKELSTFCRKFEVPLRKALEKAGRLVDDPGRPRLLLTFISGRRVFVGVASASNSALWPMGIPRLKFPREAPSRSTLKLEEAWHQFIPREQWEQRLGDDMTGVDLGASPGGWTYQLVRRGMLVTAIDNGPMAESLMDTGLVQHLMADGFTWQPKHPVDWMVCDIVEKPARTTSLIETWLGEGLCREAVVNLKLPMKQRYAEVRRLLDRMEATFKARKIRVSIACKQLYHDREEVTCHLRRLDLKPR.

Residues Ser183, 216–219 (SPGG), Asp235, Asp255, and Asp271 each bind S-adenosyl-L-methionine. Residue Lys300 is the Proton acceptor of the active site.

It belongs to the class I-like SAM-binding methyltransferase superfamily. RNA methyltransferase RlmE family. RlmM subfamily. As to quaternary structure, monomer.

It localises to the cytoplasm. It catalyses the reaction cytidine(2498) in 23S rRNA + S-adenosyl-L-methionine = 2'-O-methylcytidine(2498) in 23S rRNA + S-adenosyl-L-homocysteine + H(+). Functionally, catalyzes the 2'-O-methylation at nucleotide C2498 in 23S rRNA. The sequence is that of Ribosomal RNA large subunit methyltransferase M from Pseudomonas putida (strain ATCC 700007 / DSM 6899 / JCM 31910 / BCRC 17059 / LMG 24140 / F1).